Here is a 451-residue protein sequence, read N- to C-terminus: Glutamyl-tRNA(Gln) amidotransferase subunit D (451 aa).

Positions 78 to 97 (PREAPTPGEEEGSQEDFGQP) are disordered. Residues 99–432 (PRVFFVGTGG…EEIQRLFTAN (334 aa)) enclose the Asparaginase/glutaminase domain. Catalysis depends on residues T109, T187, D188, and K266.

This sequence belongs to the asparaginase 1 family. GatD subfamily. In terms of assembly, heterodimer of GatD and GatE.

It carries out the reaction L-glutamyl-tRNA(Gln) + L-glutamine + ATP + H2O = L-glutaminyl-tRNA(Gln) + L-glutamate + ADP + phosphate + H(+). Its function is as follows. Allows the formation of correctly charged Gln-tRNA(Gln) through the transamidation of misacylated Glu-tRNA(Gln) in organisms which lack glutaminyl-tRNA synthetase. The reaction takes place in the presence of glutamine and ATP through an activated gamma-phospho-Glu-tRNA(Gln). The GatDE system is specific for glutamate and does not act on aspartate. The polypeptide is Glutamyl-tRNA(Gln) amidotransferase subunit D (Thermofilum pendens (strain DSM 2475 / Hrk 5)).